We begin with the raw amino-acid sequence, 175 residues long: Protein GrpE (175 aa).

The interval 1-35 (MSEQKQEIENENAQNSENLQDDLQDNEKNETNELQ) is disordered. Residues 25-35 (DNEKNETNELQ) are compositionally biased toward basic and acidic residues.

Belongs to the GrpE family. In terms of assembly, homodimer.

It localises to the cytoplasm. Functionally, participates actively in the response to hyperosmotic and heat shock by preventing the aggregation of stress-denatured proteins, in association with DnaK and GrpE. It is the nucleotide exchange factor for DnaK and may function as a thermosensor. Unfolded proteins bind initially to DnaJ; upon interaction with the DnaJ-bound protein, DnaK hydrolyzes its bound ATP, resulting in the formation of a stable complex. GrpE releases ADP from DnaK; ATP binding to DnaK triggers the release of the substrate protein, thus completing the reaction cycle. Several rounds of ATP-dependent interactions between DnaJ, DnaK and GrpE are required for fully efficient folding. The protein is Protein GrpE of Campylobacter jejuni (strain RM1221).